Reading from the N-terminus, the 140-residue chain is Large-conductance mechanosensitive channel (140 aa).

Transmembrane regions (helical) follow at residues 14 to 34 (VLDL…VKSL), 37 to 57 (YLIN…DWVL), and 66 to 86 (FGSF…VFIL).

It belongs to the MscL family. In terms of assembly, homopentamer.

The protein localises to the cell membrane. Functionally, channel that opens in response to stretch forces in the membrane lipid bilayer. May participate in the regulation of osmotic pressure changes within the cell. This Pediococcus pentosaceus (strain ATCC 25745 / CCUG 21536 / LMG 10740 / 183-1w) protein is Large-conductance mechanosensitive channel.